The primary structure comprises 145 residues: MDIRQMNRTHLDHWRGLRKQLWPGHPDDAHLADGEEILQADHLASFIAMADGVAIGFADASIRHDYVNGCDSSPVVFLEGIFVLPSFRQRGVAKQLIAAVQRWGTNKGCREMASDTSPENTISQKVHQALGFEETERVIFYRKRC.

Residues 1 to 145 (MDIRQMNRTH…ERVIFYRKRC (145 aa)) enclose the N-acetyltransferase domain. The substrate site is built by Trp-22, His-25, Tyr-66, and Glu-79. Acetyl-CoA contacts are provided by residues 81 to 83 (IFV) and 89 to 94 (QRGVAK). Asp-115 contributes to the substrate binding site. An acetyl-CoA-binding site is contributed by Asn-120. Residue Glu-136 participates in substrate binding.

Homodimer.

It carries out the reaction kanamycin B + acetyl-CoA = N(6')-acetylkanamycin B + CoA + H(+). Functionally, catalyzes the transfer of an acetyl group from acetyl-CoA to the 6'-amino group of aminoglycoside molecules conferring resistance to antibiotics containing the purpurosamine ring. The chain is Aminoglycoside N(6')-acetyltransferase type 1 from Salmonella typhimurium (strain LT2 / SGSC1412 / ATCC 700720).